A 210-amino-acid chain; its full sequence is Regulator of G-protein signaling 17 (210 aa).

Positions 1–21 (MRKRQQSQNEGTQAVSQAPGN) are disordered. One can recognise an RGS domain in the interval 84-200 (NFDKMMKTPA…LNSQIYKAFV (117 aa)). Tyr-137 bears the Phosphotyrosine mark.

In terms of assembly, interacts with GNAI1 and GNAQ. Interacts with GNAZ and GNAI2. Interacts with OPRM1. Forms a complex with mu-opioid receptors and G(alpha)z/i2 subunits, including GNAZ and GNAI2; the formation of this complex results in mu-opioid receptor desensitization. Interacts with HINT1. In terms of processing, N- and O-glycosylated in synapsomal membranes. Post-translationally, serine phosphorylated in synapsomal membranes. Sumoylated with SUMO1 and SUM02 in synaptosomes. The sumoylated forms act as a scaffold for sequestering mu-opioid receptor-activated G(alpha) subunits. Desumoylated by HINT1. As to expression, detected in brain (at protein level). Highly expressed in the hypothalamus, periaqueductal gray matter, and pons-medulla. Lower levels in the thalamus, cortex and spinal cord. Weak expression in the striatum and cerebellum.

It is found in the membrane. It localises to the synapse. Its subcellular location is the synaptosome. The protein localises to the nucleus. The protein resides in the cytoplasm. In terms of biological role, regulates G protein-coupled receptor signaling cascades, including signaling via muscarinic acetylcholine receptor CHRM2 and dopamine receptor DRD2. Inhibits signal transduction by increasing the GTPase activity of G protein alpha subunits, thereby driving them into their inactive GDP-bound form. Binds selectively to GNAZ and GNAI2 subunits, accelerates their GTPase activity and regulates their signaling activities. Negatively regulates mu-opioid receptor-mediated activation of the G-proteins. The sequence is that of Regulator of G-protein signaling 17 (Rgs17) from Mus musculus (Mouse).